Here is a 493-residue protein sequence, read N- to C-terminus: Lysine--tRNA ligase (493 aa).

Mg(2+)-binding residues include Glu402 and Glu409.

It belongs to the class-II aminoacyl-tRNA synthetase family. In terms of assembly, homodimer. Mg(2+) is required as a cofactor.

The protein resides in the cytoplasm. The catalysed reaction is tRNA(Lys) + L-lysine + ATP = L-lysyl-tRNA(Lys) + AMP + diphosphate. The chain is Lysine--tRNA ligase from Ureaplasma urealyticum serovar 10 (strain ATCC 33699 / Western).